A 134-amino-acid chain; its full sequence is MNICISWFRKQTHAGQSMRRKKGVACNNGSFFQRRSRIKAIGNLSVVWRSIKTVIIWEVIYIFAGILLTEEGSDVMRMRILFVIIRIVFPLNFIPPNSKNRPRTIKCKRVLNMTERSNSFRSFRPRSSIDISRP.

The sequence is that of Citrolysin protein 2 from Citrobacter freundii.